Reading from the N-terminus, the 121-residue chain is MNKPQTIYEKLGGENAMKAAVPLFYKKVLADERVKHFFKNTDMDHQTKQQTDFLTMLLGGPNHYKGKNMTEAHKGMNLQNLHFDAIIENLAATLKELGVTDAVINEAAKVIEHTRKDMLGK.

The residue at position 1 (Met-1) is an N-acetylmethionine. Position 73 (His-73) interacts with heme.

The protein belongs to the truncated hemoglobin family. Group I subfamily. As to quaternary structure, monomer. Heme is required as a cofactor.

The polypeptide is Group 1 truncated hemoglobin (Tetrahymena pyriformis).